The chain runs to 266 residues: Sec-independent protein translocase protein TatC (266 aa).

The next 6 helical transmembrane spans lie at 28–48 (MIIATIILMNNKNVIFDYILF), 93–113 (FNIYVWTCFIGGFILSFPYIF), 134–154 (GIIMMVTFLFILGVLFGYFIL), 183–203 (LIMHSILSMGITFLFPIFIYF), 221–241 (HAFLILLILASAITPGDIFST), and 242–262 (IVVLIPLMILYQFSIYISFYV).

This sequence belongs to the TatC family. In terms of assembly, forms a complex with TatA.

Its subcellular location is the cell inner membrane. Part of the twin-arginine translocation (Tat) system that transports large folded proteins containing a characteristic twin-arginine motif in their signal peptide across membranes. The sequence is that of Sec-independent protein translocase protein TatC from Blattabacterium sp. subsp. Periplaneta americana (strain BPLAN) (Periplaneta americana symbiotic bacterium).